Here is a 713-residue protein sequence, read N- to C-terminus: Glutamine--fructose-6-phosphate aminotransferase [isomerizing] (713 aa).

The active-site For GATase activity is C2. In terms of domain architecture, Glutamine amidotransferase type-2 spans 2-316; that stretch reads CGIFGYVNFL…DDDIAHIYDG (315 aa). SIS domains follow at residues 389–528 and 561–703; these read WLST…DSIS and CNSS…VDFP.

Homotetramer.

The enzyme catalyses D-fructose 6-phosphate + L-glutamine = D-glucosamine 6-phosphate + L-glutamate. It functions in the pathway nucleotide-sugar biosynthesis; UDP-N-acetyl-alpha-D-glucosamine biosynthesis; alpha-D-glucosamine 6-phosphate from D-fructose 6-phosphate: step 1/1. In terms of biological role, involved in amino sugar synthesis (formation of chitin, supplies the amino sugars of asparagine-linked oligosaccharides of glycoproteins). This chain is Glutamine--fructose-6-phosphate aminotransferase [isomerizing] (GFA1), found in Candida albicans (strain SC5314 / ATCC MYA-2876) (Yeast).